A 170-amino-acid polypeptide reads, in one-letter code: Cytochrome b6-f complex subunit 4 (170 aa).

A run of 3 helical transmembrane segments spans residues 36–56 (LLYIFPVVILGTIACNVGLAV), 95–115 (LLGVLLMVSVPAGLLTVPFLE), and 131–151 (TVFLIGTAVALWLGIGATLPI).

This sequence belongs to the cytochrome b family. PetD subfamily. The 4 large subunits of the cytochrome b6-f complex are cytochrome b6, subunit IV (17 kDa polypeptide, petD), cytochrome f and the Rieske protein, while the 4 small subunits are petG, petL, petM and petN. The complex functions as a dimer.

Its subcellular location is the plastid. The protein resides in the chloroplast thylakoid membrane. Functionally, component of the cytochrome b6-f complex, which mediates electron transfer between photosystem II (PSII) and photosystem I (PSI), cyclic electron flow around PSI, and state transitions. The chain is Cytochrome b6-f complex subunit 4 from Nymphaea alba (White water-lily).